The sequence spans 62 residues: Photosystem II reaction center protein Z (62 aa).

Helical transmembrane passes span 8–28 (ALLALIFVSFALVVGVPVVFA) and 41–61 (FSGLSLWLLLVFVVGILNSFV).

It belongs to the PsbZ family. In terms of assembly, PSII is composed of 1 copy each of membrane proteins PsbA, PsbB, PsbC, PsbD, PsbE, PsbF, PsbH, PsbI, PsbJ, PsbK, PsbL, PsbM, PsbT, PsbY, PsbZ, Psb30/Ycf12, at least 3 peripheral proteins of the oxygen-evolving complex and a large number of cofactors. It forms dimeric complexes.

Its subcellular location is the plastid. The protein resides in the chloroplast thylakoid membrane. Controls the interaction of photosystem II (PSII) cores with the light-harvesting antenna, aiding in the dissipation of excitation energy within PSII. PSII is a light-driven water plastoquinone oxidoreductase, using light energy to abstract electrons from H(2)O, generating a proton gradient subsequently used for ATP formation. The polypeptide is Photosystem II reaction center protein Z (Chlamydomonas reinhardtii (Chlamydomonas smithii)).